Reading from the N-terminus, the 121-residue chain is Basic phospholipase A2 homolog BaTX (121 aa).

Disulfide bonds link Cys-26–Cys-115, Cys-28–Cys-44, Cys-43–Cys-95, Cys-49–Cys-121, Cys-50–Cys-88, Cys-57–Cys-81, and Cys-75–Cys-86. The segment at 105–117 is important for membrane-damaging activities in eukaryotes and bacteria; heparin-binding; the sequence is KKYRYYLKPLCKK.

It belongs to the phospholipase A2 family. Group II subfamily. K49 sub-subfamily. As to quaternary structure, homodimer; non-covalently linked. As to expression, expressed by the venom gland.

It is found in the secreted. In terms of biological role, snake venom phospholipase A2 homolog that lacks enzymatic activity. Is myotoxic and displays edema-inducing activities. In vitro, produced time-dependent, irreversible neuromuscular blockade in isolated mouse phrenic nerve-diaphragm and chick biventer cervicis preparations. A model of myotoxic mechanism has been proposed: an apo Lys49-PLA2 is activated by the entrance of a hydrophobic molecule (e.g. fatty acid) at the hydrophobic channel of the protein leading to a reorientation of a monomer. This reorientation causes a transition between 'inactive' to 'active' states, causing alignment of C-terminal and membrane-docking sites (MDoS) side-by-side and putting the membrane-disruption sites (MDiS) in the same plane, exposed to solvent and in a symmetric position for both monomers. The MDoS region stabilizes the toxin on membrane by the interaction of charged residues with phospholipid head groups. Subsequently, the MDiS region destabilizes the membrane with penetration of hydrophobic residues. This insertion causes a disorganization of the membrane, allowing an uncontrolled influx of ions (i.e. calcium and sodium), and eventually triggering irreversible intracellular alterations and cell death. The polypeptide is Basic phospholipase A2 homolog BaTX (Bothrops alternatus (Urutu)).